We begin with the raw amino-acid sequence, 1499 residues long: DENN domain-containing protein 4B (1499 aa).

The tract at residues 26–45 (PEEKWVPEPTGPLRPPRPAE) is disordered. Residues 34 to 44 (PTGPLRPPRPA) show a composition bias toward pro residues. One can recognise an MABP domain in the interval 44 to 203 (AEPITDVAVI…AVYLCYKVGL (160 aa)). The 175-residue stretch at 195–369 (VYLCYKVGLA…NVPFPSPQRP (175 aa)) folds into the uDENN domain. The cDENN domain maps to 390-526 (PLPLSGASFL…PYKLLLATLT (137 aa)). In terms of domain architecture, dDENN spans 528 to 644 (LYQQLDQTYT…ECSFGSARHA (117 aa)). The segment at 717–744 (PQEQQGALPVPGPSRSAPSSPAPRRTKQ) is disordered. Over residues 729 to 739 (PSRSAPSSPAP) the composition is skewed to low complexity. PPR repeat units lie at residues 775–811 (WFLC…VVLP) and 812–846 (DEVC…GIVP). Disordered regions lie at residues 890 to 968 (PLKD…ARGT), 988 to 1115 (PRGS…SLGS), and 1204 to 1226 (RPSA…APAP). Low complexity predominate over residues 897-915 (QQQQQQQQQQQKQQVAEQQ). The span at 933–942 (RPLQRQTTWA) shows a compositional bias: polar residues. Ser-951 is modified (phosphoserine). The segment covering 1074–1083 (IPPPELPSDL) has biased composition (pro residues). Position 1090 is a phosphoserine (Ser-1090). Residues 1103–1115 (GSTASESSASLGS) show a composition bias toward low complexity.

The protein resides in the golgi apparatus. Its function is as follows. Guanine nucleotide exchange factor (GEF) which may activate RAB10. Promotes the exchange of GDP to GTP, converting inactive GDP-bound Rab proteins into their active GTP-bound form. This is DENN domain-containing protein 4B (Dennd4b) from Mus musculus (Mouse).